The primary structure comprises 450 residues: Tubulin alpha chain (450 aa).

Gln11 is a GTP binding site. At Lys40 the chain carries N6-acetyllysine. GTP contacts are provided by Glu71, Ser140, Gly144, Thr145, Thr179, Asn206, and Asn228. Glu71 contributes to the Mg(2+) binding site. The active site involves Glu254.

This sequence belongs to the tubulin family. As to quaternary structure, dimer of alpha and beta chains. A typical microtubule is a hollow water-filled tube with an outer diameter of 25 nm and an inner diameter of 15 nM. Alpha-beta heterodimers associate head-to-tail to form protofilaments running lengthwise along the microtubule wall with the beta-tubulin subunit facing the microtubule plus end conferring a structural polarity. Microtubules usually have 13 protofilaments but different protofilament numbers can be found in some organisms and specialized cells. Requires Mg(2+) as cofactor. Post-translationally, acetylation of alpha chains at Lys-40 stabilizes microtubules and affects affinity and processivity of microtubule motors. This modification has a role in multiple cellular functions, ranging from cell motility, cell cycle progression or cell differentiation to intracellular trafficking and signaling.

Its subcellular location is the cytoplasm. The protein localises to the cytoskeleton. It carries out the reaction GTP + H2O = GDP + phosphate + H(+). In terms of biological role, tubulin is the major constituent of microtubules, a cylinder consisting of laterally associated linear protofilaments composed of alpha- and beta-tubulin heterodimers. Microtubules grow by the addition of GTP-tubulin dimers to the microtubule end, where a stabilizing cap forms. Below the cap, tubulin dimers are in GDP-bound state, owing to GTPase activity of alpha-tubulin. The polypeptide is Tubulin alpha chain (Tyrophagus putrescentiae (Mold mite)).